The sequence spans 456 residues: F-box/FBD/LRR-repeat protein At3g52680 (456 aa).

Positions 20–73 (KDRISELPDGLLLKILSSLPTNIVVATSVLSKQWRSLWKLVPNLEFDSDDYESE) constitute an F-box domain. LRR repeat units follow at residues 74-100 (HYTF…RLKF), 102-127 (NFNP…VLDF), 152-179 (TLKL…HLEF), 180-205 (VRYK…RLYR), 225-252 (TIHD…LIEE), 270-295 (IAEV…LLNL), and 318-344 (TREA…KLTD). An FBD domain is found at 358-409 (KWNEPKDVPECLLSQLETFVWRRFDWGREEEKEIATYILKNGRRLKKATFST).

This is F-box/FBD/LRR-repeat protein At3g52680 from Arabidopsis thaliana (Mouse-ear cress).